The following is a 108-amino-acid chain: MAVSLLLRGGRIRALKAALLEAKVFRGELASTVPLSTESENNKKAAGPTSKTESVFKEPTLVPESSDTTTYKNLQHHEYNAFTFLDLNLDLSKFRLPQPSSGRESPRH.

Residues 1-35 (MAVSLLLRGGRIRALKAALLEAKVFRGELASTVPL) constitute a mitochondrion transit peptide. Residues 32–67 (TVPLSTESENNKKAAGPTSKTESVFKEPTLVPESSD) are disordered. A Phosphoserine modification is found at S105.

It belongs to the complex I NDUFV3 subunit family. In terms of assembly, complex I is composed of 45 different subunits. This is a component of the flavoprotein-sulfur (FP) fragment of the enzyme.

Its subcellular location is the mitochondrion inner membrane. Its function is as follows. Accessory subunit of the mitochondrial membrane respiratory chain NADH dehydrogenase (Complex I), that is believed not to be involved in catalysis. Complex I functions in the transfer of electrons from NADH to the respiratory chain. The immediate electron acceptor for the enzyme is believed to be ubiquinone. May be the terminally assembled subunit of Complex I. This Rattus norvegicus (Rat) protein is NADH dehydrogenase [ubiquinone] flavoprotein 3, mitochondrial (Ndufv3).